Here is a 692-residue protein sequence, read N- to C-terminus: Sulfhydryl oxidase 2 (692 aa).

The first 38 residues, 1–38 (MAAARAVARDPGAYARQPPSLRAARLPRLLFLLAVVAA), serve as a signal peptide directing secretion. In terms of domain architecture, Thioredoxin spans 54-172 (SDAVWLLDSG…RQTMIDFLQN (119 aa)). Asparagine 71 is a glycosylation site (N-linked (GlcNAc...) asparagine). Active-site nucleophile residues include cysteine 85 and cysteine 88. 2 disulfides stabilise this stretch: cysteine 85-cysteine 88 and cysteine 116-cysteine 125. N-linked (GlcNAc...) asparagine glycosylation is found at asparagine 172, asparagine 212, and asparagine 260. Residues cysteine 412 and cysteine 424 are joined by a disulfide bond. The 110-residue stretch at 415-524 (SRLELRGYPC…EDPKFPKVPW (110 aa)) folds into the ERV/ALR sulfhydryl oxidase domain. Residues arginine 420, tryptophan 427, histidine 431, glutamate 472, histidine 476, 499–506 (WRKHNMVN), lysine 521, and tryptophan 524 each bind FAD. Cysteine 470 and cysteine 473 are disulfide-bonded. Cysteine 530 and cysteine 533 are disulfide-bonded. The tract at residues 568 to 607 (DQGSPGEWEAQGREQEEGKGLNPSGKSWRHHDTGSLRPPH) is disordered. Over residues 577–586 (AQGREQEEGK) the composition is skewed to basic and acidic residues. A helical membrane pass occupies residues 656-676 (SLCVVLYVASSLFLMIMYFFF).

Belongs to the quiescin-sulfhydryl oxidase (QSOX) family. The cofactor is FAD.

The protein localises to the membrane. It catalyses the reaction 2 R'C(R)SH + O2 = R'C(R)S-S(R)CR' + H2O2. Catalyzes the oxidation of sulfhydryl groups in peptide and protein thiols to disulfides with the reduction of oxygen to hydrogen peroxide. May contribute to disulfide bond formation in a variety of secreted proteins. In Mus musculus (Mouse), this protein is Sulfhydryl oxidase 2 (Qsox2).